The following is a 428-amino-acid chain: Adenylosuccinate synthetase (428 aa).

Residues 12–18 (GDEGKGK) and 40–42 (GHT) each bind GTP. Residue aspartate 13 is the Proton acceptor of the active site. Mg(2+)-binding residues include aspartate 13 and glycine 40. IMP is bound by residues 13 to 16 (DEGK), 38 to 41 (NAGH), threonine 130, arginine 144, glutamine 225, threonine 240, and arginine 304. Histidine 41 (proton donor) is an active-site residue. 300 to 306 (VNTGRSR) lines the substrate pocket. GTP contacts are provided by residues arginine 306, 332–334 (KID), and 414–416 (GVG).

It belongs to the adenylosuccinate synthetase family. As to quaternary structure, homodimer. Mg(2+) serves as cofactor.

It is found in the cytoplasm. The catalysed reaction is IMP + L-aspartate + GTP = N(6)-(1,2-dicarboxyethyl)-AMP + GDP + phosphate + 2 H(+). It participates in purine metabolism; AMP biosynthesis via de novo pathway; AMP from IMP: step 1/2. Functionally, plays an important role in the de novo pathway of purine nucleotide biosynthesis. Catalyzes the first committed step in the biosynthesis of AMP from IMP. This chain is Adenylosuccinate synthetase, found in Clostridium beijerinckii (strain ATCC 51743 / NCIMB 8052) (Clostridium acetobutylicum).